Here is a 324-residue protein sequence, read N- to C-terminus: Transcription factor MYB74 (324 aa).

HTH myb-type domains follow at residues 10–62 and 63–117; these read KNGL…TNYL and RPDI…RKRL. 2 consecutive DNA-binding regions (H-T-H motif) follow at residues 38–62 and 90–113; these read WRTL…TNYL and WSAI…NTHI.

In terms of tissue distribution, highly expressed in flowers and at lower levels in rosette leaves and cauline leaves. Expressed at low levels in roots, stems and siliques.

The protein localises to the nucleus. In terms of biological role, probable transcription factor that may function in salt stress response. In Arabidopsis thaliana (Mouse-ear cress), this protein is Transcription factor MYB74.